Here is a 396-residue protein sequence, read N- to C-terminus: Tryptophan synthase beta chain (396 aa).

Lys-96 is modified (N6-(pyridoxal phosphate)lysine).

It belongs to the TrpB family. In terms of assembly, tetramer of two alpha and two beta chains. Requires pyridoxal 5'-phosphate as cofactor.

It carries out the reaction (1S,2R)-1-C-(indol-3-yl)glycerol 3-phosphate + L-serine = D-glyceraldehyde 3-phosphate + L-tryptophan + H2O. The protein operates within amino-acid biosynthesis; L-tryptophan biosynthesis; L-tryptophan from chorismate: step 5/5. Functionally, the beta subunit is responsible for the synthesis of L-tryptophan from indole and L-serine. The sequence is that of Tryptophan synthase beta chain from Azobacteroides pseudotrichonymphae genomovar. CFP2.